The following is an 808-amino-acid chain: Copal-8-ol diphosphate hydratase, chloroplastic (808 aa).

Residues 1-50 constitute a chloroplast transit peptide; it reads MAFTFTSAHLFLPVTENHSVHVNYSIPPGNWRLWSTAKGGSNKLDIRRLR. A coiled-coil region spans residues 190 to 219; it reads DKCQKGLKFFRDNISKLEKENVEASAQMLS. Residue lysine 256 participates in substrate binding. Mg(2+) is bound by residues aspartate 391 and aspartate 393. The short motif at 391-394 is the DXDD motif element; the sequence is DLDD. Lysine 477 contributes to the substrate binding site.

It belongs to the terpene synthase family. It depends on Mg(2+) as a cofactor. In terms of tissue distribution, expressed in stems, leaves and trichomes. Not detected in roots and seeds. Higher expression in young leaves than in fully expanded leaves.

It localises to the plastid. The protein resides in the chloroplast. The catalysed reaction is (2E,6E,10E)-geranylgeranyl diphosphate + H2O = 8-hydroxycopalyl diphosphate. It functions in the pathway secondary metabolite biosynthesis; terpenoid biosynthesis. Functionally, involved in the biosynthesis of oxygen-containing labdane-type diterpenes that may be implicated in direct and indirect defense mechanisms. No activity with geranyl diphosphate or farnesyl diphosphate as substrate. This is Copal-8-ol diphosphate hydratase, chloroplastic from Cistus creticus subsp. creticus (Rock rose).